Consider the following 359-residue polypeptide: SAGA complex subunit Spt7 (359 aa).

Component of the Spt-Ada-Gcn5 acetyltransferase (SAGA) complex consisting of wda/Taf5L, Saf6, Taf9, Taf10b, Taf12, Ada1, Spt3, Spt7, Spt20, Sf3b3, Sf3b5, Nipped-A/Tra1, a histone acetyltransferase (HAT) module made up of Gcn5, Ada2b (Isoform B), Ada3 and Sgf29, and a deubiquitinase (DUB) module made up of not/nonstop, Sgf11 and e(y)2 tethered to SAGA by Atxn7. Interacts with Ada2b; the interaction is direct.

The protein localises to the nucleus. Its function is as follows. Component of the transcription regulatory complex SAGA, a multiprotein complex that activates transcription by remodeling chromatin and mediating histone acetylation and deubiquitination. The SAGA complex predominantly acetylates histone H3. This Drosophila melanogaster (Fruit fly) protein is SAGA complex subunit Spt7.